Consider the following 641-residue polypeptide: MALDSESSASNRQGSRNEQDTNPRLTAALCLTALGVVYGDIATSPLYAFREALHNIAPDSRTPESILGILSLIFWALIILVSIKYLLIIMRADNHGEGGILALLALLRPWRGSPQHQRNVLIVLGLFGAALLYGDGMITPAISVLSAMEGLEVAAPQLTSYIIPATTVILVLLFMVQKRGTARIGRVFGPIMLVWFVVIALLGLNGIIHHPQVLVAVNPYYGINFFTDNGWSAFRVLGGVFLALTGAEALYADMGHVGRAPIRLMWFALVLPALLLNYFGQGALLLLDPHEAQPFFHLAPPSFLYSLVGLATLATIIASQAIISGVFSLTRQAIQLGQSPRLTLVQTSSEEIGQVYVPAANWFMMIAAVWLVLHFRSSDNLAGAFGIAVSGTMVITTILAFFVMRERWHWNILTAVAVTVGFLIIDLAFFSSNLLKITDGGWFPLAIAVFIFTLMITWQQGRQLLIQRIHKETESFQDFLQRIVTDPPVRVSGTAVFLTIHQHDTPPALLYQLIHNKALHEQVVLVTVITEEVPRVPAAERLEVMELSSGFHRIIVHYGFMQSPNVPVALRACETLGLKIDLDTTTYYLSRASLIPTDERPGMALWRDRLFAFMSRNSAWPTAFYHLPPEHVIELGIQVEL.

Over residues 1–14 (MALDSESSASNRQG) the composition is skewed to polar residues. The disordered stretch occupies residues 1–20 (MALDSESSASNRQGSRNEQD). The next 12 helical transmembrane spans lie at 29–49 (LCLT…LYAF), 69–89 (ILSL…LLII), 120–140 (VLIV…MITP), 156–176 (PQLT…LFMV), 188–208 (FGPI…NGII), 236–256 (VLGG…DMGH), 267–287 (FALV…LLLL), 307–327 (LVGL…SGVF), 355–375 (VYVP…VLHF), 384–404 (AFGI…FFVM), 410–430 (WNIL…LAFF), and 437–457 (ITDG…LMIT).

This sequence belongs to the HAK/KUP transporter (TC 2.A.72) family.

It is found in the cell inner membrane. It catalyses the reaction K(+)(in) + H(+)(in) = K(+)(out) + H(+)(out). In terms of biological role, transport of potassium into the cell. Likely operates as a K(+):H(+) symporter. The sequence is that of Probable potassium transport system protein Kup from Nitrosomonas eutropha (strain DSM 101675 / C91 / Nm57).